Reading from the N-terminus, the 205-residue chain is Small ribosomal subunit protein uS4 (205 aa).

Over residues 1 to 16 (MSKRESSKYKIDRRMG) the composition is skewed to basic and acidic residues. The segment at 1–46 (MSKRESSKYKIDRRMGENIWGRPKSPVNRREYGPGQHGQRRKGKLS) is disordered. The S4 RNA-binding domain maps to 94 to 157 (SRLDAIVYRA…KQLVTVLEAV (64 aa)).

Belongs to the universal ribosomal protein uS4 family. In terms of assembly, part of the 30S ribosomal subunit. Contacts protein S5. The interaction surface between S4 and S5 is involved in control of translational fidelity.

Functionally, one of the primary rRNA binding proteins, it binds directly to 16S rRNA where it nucleates assembly of the body of the 30S subunit. With S5 and S12 plays an important role in translational accuracy. The chain is Small ribosomal subunit protein uS4 from Rhizobium etli (strain ATCC 51251 / DSM 11541 / JCM 21823 / NBRC 15573 / CFN 42).